The following is a 522-amino-acid chain: Probable protein kinase UbiB (522 aa).

Positions 119-496 (SFDADPVASA…QRRTNRLLLT (378 aa)) constitute a Protein kinase domain. Residues 125–133 (VASASIAQV) and K147 each bind ATP. D282 (proton acceptor) is an active-site residue. A helical transmembrane segment spans residues 494 to 514 (LLTVFYLIGGFVAGGLFAHWI).

This sequence belongs to the ABC1 family. UbiB subfamily.

The protein resides in the cell inner membrane. It participates in cofactor biosynthesis; ubiquinone biosynthesis [regulation]. In terms of biological role, is probably a protein kinase regulator of UbiI activity which is involved in aerobic coenzyme Q (ubiquinone) biosynthesis. This is Probable protein kinase UbiB from Leptothrix cholodnii (strain ATCC 51168 / LMG 8142 / SP-6) (Leptothrix discophora (strain SP-6)).